Consider the following 286-residue polypeptide: Beta-lactamase SHV-5 (286 aa).

The signal sequence occupies residues Met1–Ala21. Ser66 functions as the Acyl-ester intermediate in the catalytic mechanism. An intrachain disulfide couples Cys73 to Cys119. Glu164 acts as the Proton acceptor in catalysis. Position 230-232 (Lys230–Gly232) interacts with substrate.

This sequence belongs to the class-A beta-lactamase family.

The enzyme catalyses a beta-lactam + H2O = a substituted beta-amino acid. Functionally, SHV enzymes hydrolyze broad spectrum cephalosporins notably cefotaxime and ceftazidime. SHV-5 causes particularly high levels of resistance to aztreonam and ceftazidime. The polypeptide is Beta-lactamase SHV-5 (bla) (Klebsiella pneumoniae).